Here is a 320-residue protein sequence, read N- to C-terminus: MKLRFIECHIPKHLFMGIDEIREWDGVIWANVKTNGTISTIQILTTLKDSEKIVDKLKEMYGGANYRVVVFEPTMTYPPIEEEEEKEEPERLIREELYNIASDIANLSKENMLMLILSTIVAIAGIYKDDVALLIASMIIAPLLGPNIALSLSITVADYKLALKSIKTLIAELIFVIILSMIAGHYLPISLDNPQIHSRITLDFWSIIIALSAGIAGSLSTVSNISSIAVGVMIAIALLPPLAVFGLLIGAGYVEQSFSALILFLINMIAINLSAIVIFSAYGISPYRWWKKEEARKYTLYAILLWVTLFIAIFVLIIYH.

A run of 7 helical transmembrane segments spans residues 107–127 (LSKE…AGIY), 131–151 (VALL…IALS), 169–189 (LIAE…YLPI), 200–220 (ITLD…GSLS), 228–248 (IAVG…FGLL), 260–280 (ALIL…VIFS), and 299–319 (TLYA…LIIY).

The protein resides in the cell membrane. This is an uncharacterized protein from Methanocaldococcus jannaschii (strain ATCC 43067 / DSM 2661 / JAL-1 / JCM 10045 / NBRC 100440) (Methanococcus jannaschii).